Consider the following 134-residue polypeptide: Profilin-4 (134 aa).

C13 and C118 form a disulfide bridge. The Involved in PIP2 interaction motif lies at A84 to T100. T114 carries the post-translational modification Phosphothreonine.

Belongs to the profilin family. In terms of assembly, occurs in many kinds of cells as a complex with monomeric actin in a 1:1 ratio. Post-translationally, phosphorylated by MAP kinases.

The protein resides in the cytoplasm. Its subcellular location is the cytoskeleton. Functionally, binds to actin and affects the structure of the cytoskeleton. At high concentrations, profilin prevents the polymerization of actin, whereas it enhances it at low concentrations. This chain is Profilin-4, found in Olea europaea (Common olive).